We begin with the raw amino-acid sequence, 336 residues long: tRNA N6-adenosine threonylcarbamoyltransferase (336 aa).

Residues His111, His115, and Tyr132 each coordinate Fe cation. Substrate contacts are provided by residues 132 to 136 (YLSGG), Asp164, Asp185, and Ser264. Residue Asp292 participates in Fe cation binding.

The protein belongs to the KAE1 / TsaD family. Fe(2+) is required as a cofactor.

It localises to the cytoplasm. The catalysed reaction is L-threonylcarbamoyladenylate + adenosine(37) in tRNA = N(6)-L-threonylcarbamoyladenosine(37) in tRNA + AMP + H(+). Functionally, required for the formation of a threonylcarbamoyl group on adenosine at position 37 (t(6)A37) in tRNAs that read codons beginning with adenine. Is probably involved in the transfer of the threonylcarbamoyl moiety of threonylcarbamoyl-AMP (TC-AMP) to the N6 group of A37. This is tRNA N6-adenosine threonylcarbamoyltransferase from Sulfurisphaera tokodaii (strain DSM 16993 / JCM 10545 / NBRC 100140 / 7) (Sulfolobus tokodaii).